Here is a 399-residue protein sequence, read N- to C-terminus: CCA-adding enzyme (399 aa).

Glycine 33 and arginine 36 together coordinate ATP. 2 residues coordinate CTP: glycine 33 and arginine 36. Aspartate 46 and aspartate 48 together coordinate Mg(2+). ATP-binding residues include arginine 117, aspartate 160, arginine 163, arginine 166, and arginine 169. Residues arginine 117, aspartate 160, arginine 163, arginine 166, and arginine 169 each coordinate CTP.

The protein belongs to the tRNA nucleotidyltransferase/poly(A) polymerase family. Bacterial CCA-adding enzyme type 3 subfamily. Homodimer. Mg(2+) is required as a cofactor.

It catalyses the reaction a tRNA precursor + 2 CTP + ATP = a tRNA with a 3' CCA end + 3 diphosphate. The enzyme catalyses a tRNA with a 3' CCA end + 2 CTP + ATP = a tRNA with a 3' CCACCA end + 3 diphosphate. Catalyzes the addition and repair of the essential 3'-terminal CCA sequence in tRNAs without using a nucleic acid template. Adds these three nucleotides in the order of C, C, and A to the tRNA nucleotide-73, using CTP and ATP as substrates and producing inorganic pyrophosphate. tRNA 3'-terminal CCA addition is required both for tRNA processing and repair. Also involved in tRNA surveillance by mediating tandem CCA addition to generate a CCACCA at the 3' terminus of unstable tRNAs. While stable tRNAs receive only 3'-terminal CCA, unstable tRNAs are marked with CCACCA and rapidly degraded. This is CCA-adding enzyme from Lactobacillus helveticus (strain DPC 4571).